We begin with the raw amino-acid sequence, 425 residues long: Elongation factor 1-alpha (425 aa).

Positions 5-221 constitute a tr-type G domain; that stretch reads KPHINLAVIG…DELEVPDKPT (217 aa). Residues 14–21 are G1; that stretch reads GHIDHGKS. 14–21 is a binding site for GTP; sequence GHIDHGKS. Serine 21 contributes to the Mg(2+) binding site. A G2 region spans residues 70-74; the sequence is GITID. A G3 region spans residues 91–94; the sequence is DCPG. GTP contacts are provided by residues 91–95 and 146–149; these read DCPGH and NKMD. Residues 146–149 form a G4 region; the sequence is NKMD. The interval 185-187 is G5; it reads SAF.

This sequence belongs to the TRAFAC class translation factor GTPase superfamily. Classic translation factor GTPase family. EF-Tu/EF-1A subfamily.

The protein localises to the cytoplasm. It carries out the reaction GTP + H2O = GDP + phosphate + H(+). Functionally, GTP hydrolase that promotes the GTP-dependent binding of aminoacyl-tRNA to the A-site of ribosomes during protein biosynthesis. The polypeptide is Elongation factor 1-alpha (Methanospirillum hungatei JF-1 (strain ATCC 27890 / DSM 864 / NBRC 100397 / JF-1)).